Here is an 80-residue protein sequence, read N- to C-terminus: MLPLAKNALSRLQVRSIQQVVARQSHQKKTPTFHDKYGNAVLAGGSIFCISAWTYTATQIGIEWNLSPVGRVTPKEWRDQ.

A mitochondrion-targeting transit peptide spans 1-24; the sequence is MLPLAKNALSRLQVRSIQQVVARQ. Residues 25 to 32 are Mitochondrial matrix-facing; the sequence is SHQKKTPT. The helical transmembrane segment at 33 to 59 threads the bilayer; it reads FHDKYGNAVLAGGSIFCISAWTYTATQ. Residues 60-80 are Mitochondrial intermembrane-facing; that stretch reads IGIEWNLSPVGRVTPKEWRDQ.

This sequence belongs to the cytochrome c oxidase VIIb family. Component of the cytochrome c oxidase (complex IV, CIV), a multisubunit enzyme composed of 14 subunits. The complex is composed of a catalytic core of 3 subunits MT-CO1, MT-CO2 and MT-CO3, encoded in the mitochondrial DNA, and 11 supernumerary subunits COX4I, COX5A, COX5B, COX6A, COX6B, COX6C, COX7A, COX7B, COX7C, COX8 and NDUFA4, which are encoded in the nuclear genome. The complex exists as a monomer or a dimer and forms supercomplexes (SCs) in the inner mitochondrial membrane with NADH-ubiquinone oxidoreductase (complex I, CI) and ubiquinol-cytochrome c oxidoreductase (cytochrome b-c1 complex, complex III, CIII), resulting in different assemblies (supercomplex SCI(1)III(2)IV(1) and megacomplex MCI(2)III(2)IV(2)).

It localises to the mitochondrion inner membrane. It participates in energy metabolism; oxidative phosphorylation. Functionally, component of the cytochrome c oxidase, the last enzyme in the mitochondrial electron transport chain which drives oxidative phosphorylation. The respiratory chain contains 3 multisubunit complexes succinate dehydrogenase (complex II, CII), ubiquinol-cytochrome c oxidoreductase (cytochrome b-c1 complex, complex III, CIII) and cytochrome c oxidase (complex IV, CIV), that cooperate to transfer electrons derived from NADH and succinate to molecular oxygen, creating an electrochemical gradient over the inner membrane that drives transmembrane transport and the ATP synthase. Cytochrome c oxidase is the component of the respiratory chain that catalyzes the reduction of oxygen to water. Electrons originating from reduced cytochrome c in the intermembrane space (IMS) are transferred via the dinuclear copper A center (CU(A)) of subunit 2 and heme A of subunit 1 to the active site in subunit 1, a binuclear center (BNC) formed by heme A3 and copper B (CU(B)). The BNC reduces molecular oxygen to 2 water molecules using 4 electrons from cytochrome c in the IMS and 4 protons from the mitochondrial matrix. Plays a role in proper central nervous system (CNS) development in vertebrates. This Rattus norvegicus (Rat) protein is Cytochrome c oxidase subunit 7B, mitochondrial (Cox7b).